The following is a 150-amino-acid chain: PTTG1IP family member 2 (150 aa).

An N-terminal signal peptide occupies residues 1 to 19 (MCWLRAWSHILLPVFLSVA). The Extracellular segment spans residues 20–98 (LIQLIFNLSD…SIFWANCNVD (79 aa)). Asparagine 26 is a glycosylation site (N-linked (GlcNAc...) asparagine). A helical transmembrane segment spans residues 99–119 (LFGIVMLILIVILALAFLWYC). The Cytoplasmic segment spans residues 120 to 150 (LAYYFYMQQHMALYARHGQVPVYNWDAPGDW).

It localises to the membrane. The sequence is that of PTTG1IP family member 2 from Mus musculus (Mouse).